A 558-amino-acid chain; its full sequence is SPATS2-like protein (558 aa).

Alanine 2 carries the N-acetylalanine modification. Basic residues predominate over residues glycine 63–glutamine 79. Disordered stretches follow at residues glycine 63–isoleucine 134 and lysine 157–threonine 201. Positions glycine 80–glutamate 92 are enriched in basic and acidic residues. Serine 120 is modified (phosphoserine). The stretch at leucine 271–leucine 344 forms a coiled coil. Positions threonine 380–glycine 525 are disordered. 3 stretches are compositionally biased toward polar residues: residues serine 381 to lysine 390, serine 410 to asparagine 432, and glutamine 440 to glycine 456. Position 455 is a phosphoserine (serine 455). Over residues histidine 469–glycine 485 the composition is skewed to basic residues. Over residues histidine 513 to proline 522 the composition is skewed to basic and acidic residues.

The protein belongs to the SPATS2 family.

It is found in the cytoplasm. The protein resides in the nucleus. It localises to the nucleolus. In Homo sapiens (Human), this protein is SPATS2-like protein (SPATS2L).